Consider the following 461-residue polypeptide: Cysteine--tRNA ligase (461 aa).

Position 29 (C29) interacts with Zn(2+). Positions 31–41 match the 'HIGH' region motif; that stretch reads MTVYDFCHIGH. C210, H235, and E239 together coordinate Zn(2+). The 'KMSKS' region motif lies at 267–271; it reads KMSKS. K270 serves as a coordination point for ATP.

The protein belongs to the class-I aminoacyl-tRNA synthetase family. Monomer. Zn(2+) is required as a cofactor.

It is found in the cytoplasm. It carries out the reaction tRNA(Cys) + L-cysteine + ATP = L-cysteinyl-tRNA(Cys) + AMP + diphosphate. The polypeptide is Cysteine--tRNA ligase (Ectopseudomonas mendocina (strain ymp) (Pseudomonas mendocina)).